The sequence spans 981 residues: Isoleucine--tRNA ligase (981 aa).

The short motif at proline 50 to histidine 60 is the 'HIGH' region element. A 'KMSKS' region motif is present at residues lysine 604–serine 608. Position 607 (lysine 607) interacts with ATP.

The protein belongs to the class-I aminoacyl-tRNA synthetase family. IleS type 2 subfamily. In terms of assembly, monomer. The cofactor is Zn(2+).

It localises to the cytoplasm. The catalysed reaction is tRNA(Ile) + L-isoleucine + ATP = L-isoleucyl-tRNA(Ile) + AMP + diphosphate. Functionally, catalyzes the attachment of isoleucine to tRNA(Ile). As IleRS can inadvertently accommodate and process structurally similar amino acids such as valine, to avoid such errors it has two additional distinct tRNA(Ile)-dependent editing activities. One activity is designated as 'pretransfer' editing and involves the hydrolysis of activated Val-AMP. The other activity is designated 'posttransfer' editing and involves deacylation of mischarged Val-tRNA(Ile). The sequence is that of Isoleucine--tRNA ligase from Pyrobaculum aerophilum (strain ATCC 51768 / DSM 7523 / JCM 9630 / CIP 104966 / NBRC 100827 / IM2).